The following is a 411-amino-acid chain: Lycopene beta cyclase (411 aa).

4 to 32 (ALVIGSGPAGLAIAAELAQRGLKVQGLSP) contributes to the NAD(+) binding site.

It belongs to the lycopene cyclase family. Requires FAD as cofactor.

It catalyses the reaction a carotenoid psi-end group = a carotenoid beta-end derivative. It carries out the reaction all-trans-lycopene = gamma-carotene. The catalysed reaction is gamma-carotene = all-trans-beta-carotene. The enzyme catalyses all-trans-neurosporene = beta-zeacarotene. It participates in carotenoid biosynthesis; beta-carotene biosynthesis. The protein operates within carotenoid biosynthesis; beta-zeacarotene biosynthesis. Inhibited by the bleaching herbicide 2-(4-methylphenoxy)triethylamine hydrochloride (MPTA). Its function is as follows. Catalyzes the double cyclization reaction which converts lycopene to beta-carotene. It also converts neurosporene to the monocyclic beta-zeacarotene but does not cyclize zeta-carotene. The protein is Lycopene beta cyclase of Synechococcus elongatus (strain ATCC 33912 / PCC 7942 / FACHB-805) (Anacystis nidulans R2).